A 306-amino-acid polypeptide reads, in one-letter code: MQSARVKYGWLNVDKPLHMSSGSVVGRVKKIFNCKVGHAGTLDPLATGVLPVAVGEATKTIPYAVDGLKSYAVTVQWGSQRSTDDAEGEIIKTSSLRPSADSIREALGQFVGNIRQVPPAFSAVRVRGVRAYRLARRGEAVSLPPKEVCIVSIDLLSADEESNTADFLIVCKKGVYIRSFARDLGASLGCFGYVSFLRRKSVGPFSEENSVTLDRLEALADADVLNEALLPISYVMGDALLRLHVDAEVAEIVKKGQSVSLQRTSLNGLYAAENYDMCYLSRVGGVPVAVCKVVNGTARPVRVFDV.

The Nucleophile role is filled by D43.

Belongs to the pseudouridine synthase TruB family. Type 1 subfamily.

The catalysed reaction is uridine(55) in tRNA = pseudouridine(55) in tRNA. Functionally, responsible for synthesis of pseudouridine from uracil-55 in the psi GC loop of transfer RNAs. This is tRNA pseudouridine synthase B from Anaplasma marginale (strain St. Maries).